The primary structure comprises 306 residues: Pantothenate kinase (306 aa).

91 to 98 (GSVAVGKS) is a binding site for ATP.

It belongs to the prokaryotic pantothenate kinase family.

It localises to the cytoplasm. The catalysed reaction is (R)-pantothenate + ATP = (R)-4'-phosphopantothenate + ADP + H(+). Its pathway is cofactor biosynthesis; coenzyme A biosynthesis; CoA from (R)-pantothenate: step 1/5. This chain is Pantothenate kinase (coaA), found in Streptococcus pyogenes serotype M18 (strain MGAS8232).